Reading from the N-terminus, the 205-residue chain is UPF0301 protein Bind_0718 (205 aa).

It belongs to the UPF0301 (AlgH) family.

This is UPF0301 protein Bind_0718 from Beijerinckia indica subsp. indica (strain ATCC 9039 / DSM 1715 / NCIMB 8712).